A 178-amino-acid polypeptide reads, in one-letter code: Negative modulator of initiation of replication (178 aa).

The tract at residues 113-117 (RTRVY) is interaction with DNA.

It belongs to the SeqA family. Homodimer. Polymerizes to form helical filaments.

Its subcellular location is the cytoplasm. Negative regulator of replication initiation, which contributes to regulation of DNA replication and ensures that replication initiation occurs exactly once per chromosome per cell cycle. Binds to pairs of hemimethylated GATC sequences in the oriC region, thus preventing assembly of replication proteins and re-initiation at newly replicated origins. Repression is relieved when the region becomes fully methylated. The polypeptide is Negative modulator of initiation of replication (Photobacterium profundum (strain SS9)).